The chain runs to 218 residues: Probable septum site-determining protein MinC (218 aa).

This sequence belongs to the MinC family. Interacts with MinD and FtsZ.

Cell division inhibitor that blocks the formation of polar Z ring septums. Rapidly oscillates between the poles of the cell to destabilize FtsZ filaments that have formed before they mature into polar Z rings. Prevents FtsZ polymerization. The polypeptide is Probable septum site-determining protein MinC (Moorella thermoacetica (strain ATCC 39073 / JCM 9320)).